The sequence spans 539 residues: Chaperonin GroEL (539 aa).

ATP contacts are provided by residues 30 to 33 (TLGP), Lys-51, 87 to 91 (DGTTT), Gly-415, 479 to 481 (NAA), and Asp-495.

Belongs to the chaperonin (HSP60) family. In terms of assembly, forms a cylinder of 14 subunits composed of two heptameric rings stacked back-to-back. Interacts with the co-chaperonin GroES.

It is found in the cytoplasm. The enzyme catalyses ATP + H2O + a folded polypeptide = ADP + phosphate + an unfolded polypeptide.. Together with its co-chaperonin GroES, plays an essential role in assisting protein folding. The GroEL-GroES system forms a nano-cage that allows encapsulation of the non-native substrate proteins and provides a physical environment optimized to promote and accelerate protein folding. This chain is Chaperonin GroEL, found in Kluyvera intermedia (Enterobacter intermedius).